The primary structure comprises 2185 residues: Genome polyprotein (2185 aa).

A lipid anchor (N-myristoyl glycine; by host) is attached at G2. Residues 2–1495 (GAQVSTQKTG…HVSRAFICLQ (1494 aa)) are Cytoplasmic-facing. The segment at 566–582 (FYQGPPGEAVERAIARV) is amphipathic alpha-helix. Residues H872 and D890 each act as for protease 2A activity in the active site. Zn(2+)-binding residues include C907 and C909. C961 serves as the catalytic For protease 2A activity. Positions 967 and 969 each coordinate Zn(2+). The membrane-binding stretch occupies residues 1101-1173 (NNNWLKKFTE…EQSAPSQSDQ (73 aa)). The oligomerization stretch occupies residues 1101 to 1239 (NNNWLKKFTE…SPGAGKSVAT (139 aa)). The interval 1122 to 1126 (AVKIQ) is RNA-binding. In terms of domain architecture, SF3 helicase spans 1205-1361 (EKKMSNYIQF…SMYSQNGKIN (157 aa)). The Zn(2+) site is built by C1369, C1381, and C1386. Residues 1369–1386 (CDEECCPVNFKRCCPLVC) form a C4-type; degenerate zinc finger. Positions 1413–1420 (EYNHRHSV) are RNA-binding. The interval 1424–1429 (LEALFQ) is oligomerization. An intramembrane segment occupies 1496-1511 (ALTTFVSVAGIIYIIY). The Cytoplasmic segment spans residues 1512 to 2185 (KLFAGFQGAY…TLRRKWLDSF (674 aa)). Y1521 carries the post-translational modification O-(5'-phospho-RNA)-tyrosine. A Peptidase C3 domain is found at 1541-1719 (GPAFEFAVAM…FSAALLKHYF (179 aa)). Active-site for protease 3C activity residues include H1580, E1611, and C1687. Positions 1950–2066 (GHLIAFDYSG…SYPWPIDASL (117 aa)) constitute a RdRp catalytic domain. Positions 1956 and 2052 each coordinate Mg(2+).

The protein belongs to the picornaviruses polyprotein family. Interacts with capsid protein VP1 and capsid protein VP3 to form heterotrimeric protomers. In terms of assembly, interacts with capsid protein VP0, and capsid protein VP3 to form heterotrimeric protomers. Five protomers subsequently associate to form pentamers which serve as building blocks for the capsid. Interacts with capsid protein VP2, capsid protein VP3 and capsid protein VP4 following cleavage of capsid protein VP0. As to quaternary structure, interacts with capsid protein VP1 and capsid protein VP3 in the mature capsid. Interacts with capsid protein VP0 and capsid protein VP1 to form heterotrimeric protomers. Five protomers subsequently associate to form pentamers which serve as building blocks for the capsid. Interacts with capsid protein VP4 in the mature capsid. Interacts with protein 2C; this interaction may be important for virion morphogenesis. In terms of assembly, interacts with capsid protein VP1 and capsid protein VP3. As to quaternary structure, homodimer. Homohexamer; forms a hexameric ring structure with 6-fold symmetry characteristic of AAA+ ATPases. Interacts (via N-terminus) with host RTN3 (via reticulon domain); this interaction is important for viral replication. Interacts with capsid protein VP3; this interaction may be important for virion morphogenesis. In terms of assembly, interacts with protein 3CD. As to quaternary structure, homodimer. Interacts with host GBF1. Interacts (via GOLD domain) with host ACBD3 (via GOLD domain); this interaction allows the formation of a viral protein 3A/ACBD3 heterotetramer with a 2:2 stoichiometry, which will stimulate the recruitment of host PI4KB in order to synthesize PI4P at the viral RNA replication sites. Interacts with RNA-directed RNA polymerase. In terms of assembly, interacts with protein 3AB and with RNA-directed RNA polymerase. As to quaternary structure, interacts with Viral protein genome-linked and with protein 3CD. Mg(2+) serves as cofactor. Post-translationally, specific enzymatic cleavages in vivo by the viral proteases yield processing intermediates and the mature proteins. In terms of processing, myristoylation is required for the formation of pentamers during virus assembly. Further assembly of 12 pentamers and a molecule of genomic RNA generates the provirion. During virion maturation, immature virions are rendered infectious following cleavage of VP0 into VP4 and VP2. This maturation seems to be an autocatalytic event triggered by the presence of RNA in the capsid and it is followed by a conformational change infectious virion. Post-translationally, myristoylation is required during RNA encapsidation and formation of the mature virus particle. In terms of processing, VPg is uridylylated by the polymerase into VPg-pUpU. This acts as a nucleotide-peptide primer for the genomic RNA replication.

It localises to the virion. It is found in the host cytoplasm. The protein localises to the host cytoplasmic vesicle membrane. The protein resides in the host nucleus. The enzyme catalyses a ribonucleoside 5'-triphosphate + H2O = a ribonucleoside 5'-diphosphate + phosphate + H(+). It carries out the reaction Selective cleavage of Tyr-|-Gly bond in the picornavirus polyprotein.. The catalysed reaction is RNA(n) + a ribonucleoside 5'-triphosphate = RNA(n+1) + diphosphate. It catalyses the reaction Selective cleavage of Gln-|-Gly bond in the poliovirus polyprotein. In other picornavirus reactions Glu may be substituted for Gln, and Ser or Thr for Gly.. Its activity is regulated as follows. Replication or transcription is subject to high level of random mutations by the nucleotide analog ribavirin. Forms an icosahedral capsid of pseudo T=3 symmetry with capsid proteins VP2 and VP3. The capsid is 300 Angstroms in diameter, composed of 60 copies of each capsid protein and enclosing the viral positive strand RNA genome. Capsid protein VP1 mainly forms the vertices of the capsid. Capsid protein VP1 interacts with host cell receptor to provide virion attachment to target host cells. This attachment induces virion internalization. Tyrosine kinases are probably involved in the entry process. After binding to its receptor, the capsid undergoes conformational changes. Capsid protein VP1 N-terminus (that contains an amphipathic alpha-helix) and capsid protein VP4 are externalized. Together, they shape a pore in the host membrane through which viral genome is translocated to host cell cytoplasm. Functionally, forms an icosahedral capsid of pseudo T=3 symmetry with capsid proteins VP2 and VP3. The capsid is 300 Angstroms in diameter, composed of 60 copies of each capsid protein and enclosing the viral positive strand RNA genome. In terms of biological role, lies on the inner surface of the capsid shell. After binding to the host receptor, the capsid undergoes conformational changes. Capsid protein VP4 is released, Capsid protein VP1 N-terminus is externalized, and together, they shape a pore in the host membrane through which the viral genome is translocated into the host cell cytoplasm. Its function is as follows. Component of immature procapsids, which is cleaved into capsid proteins VP4 and VP2 after maturation. Allows the capsid to remain inactive before the maturation step. Cysteine protease that cleaves viral polyprotein and specific host proteins. It is responsible for the autocatalytic cleavage between the P1 and P2 regions, which is the first cleavage occurring in the polyprotein. Also cleaves the host translation initiation factor EIF4G1, in order to shut down the capped cellular mRNA translation. Inhibits the host nucleus-cytoplasm protein and RNA trafficking by cleaving host members of the nuclear pores. Counteracts stress granule formation probably by antagonizing its assembly or promoting its dissassembly. Cleaves and inhibits host IFIH1/MDA5, thereby inhibiting the type-I IFN production and the establishment of the antiviral state. Cleaves and inhibits host MAVS, thereby inhibiting the type-I IFN production and the establishment of the antiviral state. Functionally, plays an essential role in the virus replication cycle by acting as a viroporin. Creates a pore in the host endoplasmic reticulum and as a consequence releases Ca2+ in the cytoplasm of infected cell. In turn, high levels of cytoplasmic calcium may trigger membrane trafficking and transport of viral ER-associated proteins to viroplasms, sites of viral genome replication. In terms of biological role, induces and associates with structural rearrangements of intracellular membranes. Displays RNA-binding, nucleotide binding and NTPase activities. May play a role in virion morphogenesis and viral RNA encapsidation by interacting with the capsid protein VP3. Its function is as follows. Localizes the viral replication complex to the surface of membranous vesicles. Together with protein 3CD binds the Cis-Active RNA Element (CRE) which is involved in RNA synthesis initiation. Acts as a cofactor to stimulate the activity of 3D polymerase, maybe through a nucleid acid chaperone activity. Localizes the viral replication complex to the surface of membranous vesicles. It inhibits host cell endoplasmic reticulum-to-Golgi apparatus transport and causes the disassembly of the Golgi complex, possibly through GBF1 interaction. This would result in depletion of MHC, trail receptors and IFN receptors at the host cell surface. Plays an essential role in viral RNA replication by recruiting ACBD3 and PI4KB at the viral replication sites, thereby allowing the formation of the rearranged membranous structures where viral replication takes place. Functionally, acts as a primer for viral RNA replication and remains covalently bound to viral genomic RNA. VPg is uridylylated prior to priming replication into VPg-pUpU. The oriI viral genomic sequence may act as a template for this. The VPg-pUpU is then used as primer on the genomic RNA poly(A) by the RNA-dependent RNA polymerase to replicate the viral genome. During genome replication, the VPg-RNA linkage is removed by the host TDP2, thereby accelerating replication. During the late stage of the replication cycle, host TDP2 is excluded from sites of viral RNA synthesis and encapsidation, allowing for the generation of progeny virions. In terms of biological role, involved in the viral replication complex and viral polypeptide maturation. It exhibits protease activity with a specificity and catalytic efficiency that is different from protease 3C. Protein 3CD lacks polymerase activity. Protein 3CD binds to the 5'UTR of the viral genome. Its function is as follows. Replicates the viral genomic RNA on the surface of intracellular membranes. May form linear arrays of subunits that propagate along a strong head-to-tail interaction called interface-I. Covalently attaches UMP to a tyrosine of VPg, which is used to prime RNA synthesis. The positive stranded RNA genome is first replicated at virus induced membranous vesicles, creating a dsRNA genomic replication form. This dsRNA is then used as template to synthesize positive stranded RNA genomes. ss(+)RNA genomes are either translated, replicated or encapsidated. Major viral protease that mediates proteolytic processing of the polyprotein. Cleaves host EIF5B, contributing to host translation shutoff. Also cleaves host PABPC1, contributing to host translation shutoff. Cleaves host NLRP1, triggers host N-glycine-mediated degradation of the autoinhibitory NLRP1 N-terminal fragment. The polypeptide is Genome polyprotein (Homo sapiens (Human)).